A 144-amino-acid chain; its full sequence is Deoxyuridine 5'-triphosphate nucleotidohydrolase (144 aa).

Residues 63 to 65, N76, 80 to 82, and K90 contribute to the substrate site; these read RSG and TID.

The protein belongs to the dUTPase family. Mg(2+) serves as cofactor.

It carries out the reaction dUTP + H2O = dUMP + diphosphate + H(+). The protein operates within pyrimidine metabolism; dUMP biosynthesis; dUMP from dCTP (dUTP route): step 2/2. In terms of biological role, this enzyme is involved in nucleotide metabolism: it produces dUMP, the immediate precursor of thymidine nucleotides and it decreases the intracellular concentration of dUTP so that uracil cannot be incorporated into DNA. The chain is Deoxyuridine 5'-triphosphate nucleotidohydrolase from Hydrogenobaculum sp. (strain Y04AAS1).